Consider the following 391-residue polypeptide: Tyrosine recombinase XerC-like (391 aa).

The Core-binding (CB) domain occupies 64-148 (VTLGDLMHTW…FLKTFFNYAV (85 aa)). The 210-residue stretch at 175–384 (TEIETFSDEE…IPKQKTNAVE (210 aa)) folds into the Tyr recombinase domain. Catalysis depends on residues Arg210, Lys244, His335, Arg338, and His361. Tyr371 serves as the catalytic O-(3'-phospho-DNA)-tyrosine intermediate.

The protein belongs to the 'phage' integrase family.

Its subcellular location is the cytoplasm. Site-specific tyrosine recombinase, which acts by catalyzing the cutting and rejoining of the recombining DNA molecules. This chain is Tyrosine recombinase XerC-like, found in Caldanaerobacter subterraneus subsp. tengcongensis (strain DSM 15242 / JCM 11007 / NBRC 100824 / MB4) (Thermoanaerobacter tengcongensis).